A 356-amino-acid polypeptide reads, in one-letter code: MTKIAFTGGGTVGHVSVNLSLIPTALSQGYEALYIGSKNGIEREMIESQLPEIKYYPISSGKLRRYISLENAKDVFKVLKGILDARKVLKKEKPDLLFSKGGFVSVPVVIAAKSLNIPTLIHESDLTPGLANKIALKFAKKIYTTFEETLNYLPKEKADFIGATIREDLKNGNAHNGYQLTGFNENKKVLLVMGGSLGSKKLNSIIRENLDALLQQYQVIHLTGKGLKDAQVKKSGYIQYEFVKEDLTDLLAITDTVISRAGSNAIYEFLTLRIPMLLVPLGLDQSRGDQIDNANHFADKGYAKAIDEEQLTAQILLQELNEMEQERTRIINNMKSYEQSYTKEALFDKMIKDALN.

Residues arginine 166, serine 196, and glutamine 290 each contribute to the UDP-N-acetyl-alpha-D-glucosamine site.

It belongs to the glycosyltransferase 28 family. MurG subfamily.

The protein localises to the cell membrane. The enzyme catalyses Mur2Ac(oyl-L-Ala-gamma-D-Glu-L-Lys-D-Ala-D-Ala)-di-trans,octa-cis-undecaprenyl diphosphate + UDP-N-acetyl-alpha-D-glucosamine = beta-D-GlcNAc-(1-&gt;4)-Mur2Ac(oyl-L-Ala-gamma-D-Glu-L-Lys-D-Ala-D-Ala)-di-trans,octa-cis-undecaprenyl diphosphate + UDP + H(+). The protein operates within cell wall biogenesis; peptidoglycan biosynthesis. Cell wall formation. Catalyzes the transfer of a GlcNAc subunit on undecaprenyl-pyrophosphoryl-MurNAc-pentapeptide (lipid intermediate I) to form undecaprenyl-pyrophosphoryl-MurNAc-(pentapeptide)GlcNAc (lipid intermediate II). The sequence is that of UDP-N-acetylglucosamine--N-acetylmuramyl-(pentapeptide) pyrophosphoryl-undecaprenol N-acetylglucosamine transferase from Staphylococcus aureus (strain USA300).